The following is a 466-amino-acid chain: Cysteine--tRNA ligase (466 aa).

Cysteine 33 serves as a coordination point for Zn(2+). The 'HIGH' region signature appears at 35–45 (PTVYDFAHIGN). Positions 221, 246, and 250 each coordinate Zn(2+). The 'KMSKS' region motif lies at 279–283 (KMSKS). Residue lysine 282 coordinates ATP.

The protein belongs to the class-I aminoacyl-tRNA synthetase family. In terms of assembly, monomer. It depends on Zn(2+) as a cofactor.

The protein localises to the cytoplasm. The catalysed reaction is tRNA(Cys) + L-cysteine + ATP = L-cysteinyl-tRNA(Cys) + AMP + diphosphate. This Sinorhizobium medicae (strain WSM419) (Ensifer medicae) protein is Cysteine--tRNA ligase.